A 254-amino-acid polypeptide reads, in one-letter code: Alcohol dehydrogenase (254 aa).

Residue 10–33 participates in NAD(+) binding; it reads FVAGLGGIGLDTSRELVKRNLKNL. Ser-138 provides a ligand contact to substrate. Tyr-151 serves as the catalytic Proton acceptor.

It belongs to the short-chain dehydrogenases/reductases (SDR) family. In terms of assembly, homodimer.

The enzyme catalyses a primary alcohol + NAD(+) = an aldehyde + NADH + H(+). The catalysed reaction is a secondary alcohol + NAD(+) = a ketone + NADH + H(+). This Drosophila persimilis (Fruit fly) protein is Alcohol dehydrogenase (Adh).